A 633-amino-acid chain; its full sequence is Chaperone protein HtpG (633 aa).

The tract at residues 1-341 (MTAPHETMSF…SADLPLNVSR (341 aa)) is a; substrate-binding. The segment at 342-562 (ELLQESRDVK…DGDMSGYLQR (221 aa)) is b. A c region spans residues 563–633 (LLKQAGQKAP…YVQRVNRLLA (71 aa)).

Belongs to the heat shock protein 90 family. In terms of assembly, homodimer.

It localises to the cytoplasm. Molecular chaperone. Has ATPase activity. The chain is Chaperone protein HtpG from Cupriavidus metallidurans (strain ATCC 43123 / DSM 2839 / NBRC 102507 / CH34) (Ralstonia metallidurans).